Here is a 435-residue protein sequence, read N- to C-terminus: Aspartate aminotransferase (435 aa).

Pyridoxal 5'-phosphate is bound by residues tyrosine 69 and 100–101 (SL). 139–141 (YDR) contacts substrate. Residues asparagine 189, tyrosine 221, and 254–256 (STS) contribute to the pyridoxal 5'-phosphate site. Arginine 392 provides a ligand contact to substrate.

The protein belongs to the class-I pyridoxal-phosphate-dependent aminotransferase family. The cofactor is pyridoxal 5'-phosphate.

The catalysed reaction is L-aspartate + 2-oxoglutarate = oxaloacetate + L-glutamate. Main aspartate aminotransferase that couples nitrogen assimilation to aspartate synthesis. Has a weak, but significant, side activity toward kynurenine (Kyn). Oxaloacetate and 2-oxoglutarate, but not pyruvate, serve as amino acceptors, while Asp, Glu and Kyn serve as the best amino donors. Essential for axenic growth and survival of M.tuberculosis in macrophages and in mice. The sequence is that of Aspartate aminotransferase from Mycobacterium tuberculosis (strain ATCC 25618 / H37Rv).